The sequence spans 32 residues: Cytochrome b6-f complex subunit 8 (32 aa).

The helical transmembrane segment at 6–26 (IVSLAWAALMVVFTFSLSLVV) threads the bilayer.

Belongs to the PetN family. The 4 large subunits of the cytochrome b6-f complex are cytochrome b6, subunit IV (17 kDa polypeptide, PetD), cytochrome f and the Rieske protein, while the 4 small subunits are PetG, PetL, PetM and PetN. The complex functions as a dimer.

Its subcellular location is the plastid. The protein resides in the chloroplast thylakoid membrane. In terms of biological role, component of the cytochrome b6-f complex, which mediates electron transfer between photosystem II (PSII) and photosystem I (PSI), cyclic electron flow around PSI, and state transitions. This is Cytochrome b6-f complex subunit 8 from Illicium oligandrum (Star anise).